We begin with the raw amino-acid sequence, 652 residues long: Acetyl-coenzyme A synthetase (652 aa).

CoA is bound by residues 191–194, threonine 311, and asparagine 335; that span reads RAGR. Residues 387–389, 411–416, aspartate 500, and arginine 515 contribute to the ATP site; these read GEP and DTWWQT. CoA is bound at residue serine 523. Arginine 526 serves as a coordination point for ATP. Valine 537, histidine 539, and isoleucine 542 together coordinate Mg(2+). Arginine 584 serves as a coordination point for CoA. Lysine 609 is subject to N6-acetyllysine.

It belongs to the ATP-dependent AMP-binding enzyme family. Mg(2+) is required as a cofactor. Post-translationally, acetylated. Deacetylation by the SIR2-homolog deacetylase activates the enzyme.

The enzyme catalyses acetate + ATP + CoA = acetyl-CoA + AMP + diphosphate. Catalyzes the conversion of acetate into acetyl-CoA (AcCoA), an essential intermediate at the junction of anabolic and catabolic pathways. Acs undergoes a two-step reaction. In the first half reaction, Acs combines acetate with ATP to form acetyl-adenylate (AcAMP) intermediate. In the second half reaction, it can then transfer the acetyl group from AcAMP to the sulfhydryl group of CoA, forming the product AcCoA. Functionally, enables the cell to use acetate during aerobic growth to generate energy via the TCA cycle, and biosynthetic compounds via the glyoxylate shunt. Acetylates CheY, the response regulator involved in flagellar movement and chemotaxis. This chain is Acetyl-coenzyme A synthetase, found in Escherichia coli O157:H7.